The primary structure comprises 120 residues: Flagellar protein FliT (120 aa).

Residues 1-50 are required for homodimerization; that stretch reads MERHQHLLSEYQQILTLSEQMLMLATVENWDALVDLEMAYLKAVENTANI. A fliD binding region spans residues 60–98; it reads LQELLRQKLRSILENEIEIKRLLQRRLDKLSELVGQSTR.

The protein belongs to the FliT family. Homodimer. Interacts with FliD and FlhC.

The protein resides in the cytoplasm. The protein localises to the cytosol. In terms of biological role, dual-function protein that regulates the transcription of class 2 flagellar operons and that also acts as an export chaperone for the filament-capping protein FliD. As a transcriptional regulator, acts as an anti-FlhDC factor; it directly binds FlhC, thus inhibiting the binding of the FlhC/FlhD complex to class 2 promoters, resulting in decreased expression of class 2 flagellar operons. As a chaperone, effects FliD transition to the membrane by preventing its premature polymerization, and by directing it to the export apparatus. This Yersinia pseudotuberculosis serotype IB (strain PB1/+) protein is Flagellar protein FliT.